A 315-amino-acid polypeptide reads, in one-letter code: METWVNQSYTDGFFLLGIFSHSTADLVLFSVVMAVFTVALCGNVLLIFLIYMDPHLHTPMYFFLSQLSLMDLMLVCTNVPKMAANFLSGRKSISFVGCGIQIGLFVCLVGSEGLLLGLMAYDRYVAISHPLHYPILMNQRVCLQITGSSWAFGIIDGLIQMVVVMNFPYCGLRKVNHFFCEMLSLLKLACVDTSLFEKVIFACCVFMLLFPFSIIVASYAHILGTVLQMHSAQAWKKALATCSSHLTAVTLFYGAAMFIYLRPRHYRAPSHDKVASIFYTVLTPMLNPLIYSLRNREVMGALRKGLDRCRIGSQH.

The Extracellular segment spans residues 1–26 (METWVNQSYTDGFFLLGIFSHSTADL). N-linked (GlcNAc...) asparagine glycosylation is present at asparagine 6. The helical transmembrane segment at 27 to 50 (VLFSVVMAVFTVALCGNVLLIFLI) threads the bilayer. Topologically, residues 51–58 (YMDPHLHT) are cytoplasmic. A helical membrane pass occupies residues 59–80 (PMYFFLSQLSLMDLMLVCTNVP). The Extracellular segment spans residues 81–101 (KMAANFLSGRKSISFVGCGIQ). A disulfide bridge connects residues cysteine 98 and cysteine 190. Residues 102–121 (IGLFVCLVGSEGLLLGLMAY) form a helical membrane-spanning segment. Residues 122-140 (DRYVAISHPLHYPILMNQR) are Cytoplasmic-facing. Residues 141 to 159 (VCLQITGSSWAFGIIDGLI) form a helical membrane-spanning segment. Residues 160–196 (QMVVVMNFPYCGLRKVNHFFCEMLSLLKLACVDTSLF) lie on the Extracellular side of the membrane. A helical transmembrane segment spans residues 197–220 (EKVIFACCVFMLLFPFSIIVASYA). Residues 221 to 237 (HILGTVLQMHSAQAWKK) lie on the Cytoplasmic side of the membrane. The chain crosses the membrane as a helical span at residues 238 to 260 (ALATCSSHLTAVTLFYGAAMFIY). Topologically, residues 261–273 (LRPRHYRAPSHDK) are extracellular. A helical transmembrane segment spans residues 274–293 (VASIFYTVLTPMLNPLIYSL). At 294–315 (RNREVMGALRKGLDRCRIGSQH) the chain is on the cytoplasmic side.

Belongs to the G-protein coupled receptor 1 family.

The protein resides in the cell membrane. Functionally, odorant receptor. This is Olfactory receptor 2V2 (OR2V2) from Homo sapiens (Human).